The following is a 525-amino-acid chain: GMP synthase [glutamine-hydrolyzing] (525 aa).

Residues 9 to 207 (RILILDFGSQ…VRDICQCEAL (199 aa)) form the Glutamine amidotransferase type-1 domain. The active-site Nucleophile is C86. Active-site residues include H181 and E183. Residues 208-400 (WTPAKIIDDA…LGLPYDMLYR (193 aa)) enclose the GMPS ATP-PPase domain. An ATP-binding site is contributed by 235-241 (SGGVDSS).

In terms of assembly, homodimer.

The catalysed reaction is XMP + L-glutamine + ATP + H2O = GMP + L-glutamate + AMP + diphosphate + 2 H(+). The protein operates within purine metabolism; GMP biosynthesis; GMP from XMP (L-Gln route): step 1/1. Its function is as follows. Catalyzes the synthesis of GMP from XMP. This chain is GMP synthase [glutamine-hydrolyzing], found in Shigella boydii serotype 18 (strain CDC 3083-94 / BS512).